The chain runs to 616 residues: Dihydroxy-acid dehydratase (616 aa).

Aspartate 81 serves as a coordination point for Mg(2+). [2Fe-2S] cluster is bound at residue cysteine 122. Positions 123 and 124 each coordinate Mg(2+). N6-carboxylysine is present on lysine 124. Cysteine 195 provides a ligand contact to [2Fe-2S] cluster. Glutamate 491 contributes to the Mg(2+) binding site. The Proton acceptor role is filled by serine 517.

Belongs to the IlvD/Edd family. Homodimer. Requires [2Fe-2S] cluster as cofactor. Mg(2+) serves as cofactor.

It carries out the reaction (2R)-2,3-dihydroxy-3-methylbutanoate = 3-methyl-2-oxobutanoate + H2O. The enzyme catalyses (2R,3R)-2,3-dihydroxy-3-methylpentanoate = (S)-3-methyl-2-oxopentanoate + H2O. Its pathway is amino-acid biosynthesis; L-isoleucine biosynthesis; L-isoleucine from 2-oxobutanoate: step 3/4. It participates in amino-acid biosynthesis; L-valine biosynthesis; L-valine from pyruvate: step 3/4. Functionally, functions in the biosynthesis of branched-chain amino acids. Catalyzes the dehydration of (2R,3R)-2,3-dihydroxy-3-methylpentanoate (2,3-dihydroxy-3-methylvalerate) into 2-oxo-3-methylpentanoate (2-oxo-3-methylvalerate) and of (2R)-2,3-dihydroxy-3-methylbutanoate (2,3-dihydroxyisovalerate) into 2-oxo-3-methylbutanoate (2-oxoisovalerate), the penultimate precursor to L-isoleucine and L-valine, respectively. In Escherichia coli (strain 55989 / EAEC), this protein is Dihydroxy-acid dehydratase.